Consider the following 232-residue polypeptide: Phosphoadenosine 5'-phosphosulfate reductase (232 aa).

C228 (nucleophile; cysteine thiosulfonate intermediate) is an active-site residue.

It belongs to the PAPS reductase family. CysH subfamily.

Its subcellular location is the cytoplasm. The enzyme catalyses [thioredoxin]-disulfide + sulfite + adenosine 3',5'-bisphosphate + 2 H(+) = [thioredoxin]-dithiol + 3'-phosphoadenylyl sulfate. Its pathway is sulfur metabolism; hydrogen sulfide biosynthesis; sulfite from sulfate: step 3/3. Its function is as follows. Catalyzes the formation of sulfite from phosphoadenosine 5'-phosphosulfate (PAPS) using thioredoxin as an electron donor. This is Phosphoadenosine 5'-phosphosulfate reductase from Synechococcus sp. (strain ATCC 27144 / PCC 6301 / SAUG 1402/1) (Anacystis nidulans).